Here is a 61-residue protein sequence, read N- to C-terminus: Progonadoliberin-1 (61 aa).

Glutamine 1 carries the post-translational modification Pyrrolidone carboxylic acid. Glycine 10 carries the glycine amide modification.

This sequence belongs to the GnRH family.

It localises to the secreted. Stimulates the secretion of gonadotropins; it stimulates the secretion of both luteinizing and follicle-stimulating hormones. The polypeptide is Progonadoliberin-1 (GNRH1) (Ovis aries (Sheep)).